We begin with the raw amino-acid sequence, 129 residues long: UPF0146 protein VNG_2609C (129 aa).

It belongs to the UPF0146 family.

In Halobacterium salinarum (strain ATCC 700922 / JCM 11081 / NRC-1) (Halobacterium halobium), this protein is UPF0146 protein VNG_2609C.